The primary structure comprises 245 residues: Probable transcriptional regulatory protein SUN_1622 (245 aa).

It belongs to the TACO1 family.

The protein resides in the cytoplasm. The sequence is that of Probable transcriptional regulatory protein SUN_1622 from Sulfurovum sp. (strain NBC37-1).